Here is a 42-residue protein sequence, read N- to C-terminus: Photosystem I reaction center subunit IX (42 aa).

Residues 7 to 27 traverse the membrane as a helical segment; the sequence is YLSVAPVLSTLWFGILAGLLI.

The protein belongs to the PsaJ family.

It localises to the plastid. The protein resides in the chloroplast thylakoid membrane. In terms of biological role, may help in the organization of the PsaE and PsaF subunits. This is Photosystem I reaction center subunit IX from Lemna minor (Common duckweed).